Consider the following 252-residue polypeptide: D-aminoacyl-tRNA deacylase (252 aa).

The protein belongs to the DtdA deacylase family. As to quaternary structure, monomer. Zn(2+) serves as cofactor.

The enzyme catalyses a D-aminoacyl-tRNA + H2O = a tRNA + a D-alpha-amino acid + H(+). It carries out the reaction glycyl-tRNA(Ala) + H2O = tRNA(Ala) + glycine + H(+). Its function is as follows. D-aminoacyl-tRNA deacylase with broad substrate specificity. By recycling D-aminoacyl-tRNA to D-amino acids and free tRNA molecules, this enzyme counteracts the toxicity associated with the formation of D-aminoacyl-tRNA entities in vivo. The protein is D-aminoacyl-tRNA deacylase of Pyrobaculum neutrophilum (strain DSM 2338 / JCM 9278 / NBRC 100436 / V24Sta) (Thermoproteus neutrophilus).